We begin with the raw amino-acid sequence, 134 residues long: Large ribosomal subunit protein uL16c (134 aa).

The interval 1 to 22 (MLSPKRTRFRKQHRGRMKGISH) is disordered.

It belongs to the universal ribosomal protein uL16 family. As to quaternary structure, part of the 50S ribosomal subunit.

Its subcellular location is the plastid. It is found in the chloroplast. The protein is Large ribosomal subunit protein uL16c of Nicotiana tomentosiformis (Tobacco).